A 284-amino-acid polypeptide reads, in one-letter code: NAD kinase (284 aa).

The active-site Proton acceptor is Asp70. NAD(+)-binding positions include 70–71 (DG), 139–140 (NE), Lys167, Asp169, Leu177, 180–185 (TAYNLS), and Gln236.

Belongs to the NAD kinase family. The cofactor is a divalent metal cation.

The protein localises to the cytoplasm. The enzyme catalyses NAD(+) + ATP = ADP + NADP(+) + H(+). Functionally, involved in the regulation of the intracellular balance of NAD and NADP, and is a key enzyme in the biosynthesis of NADP. Catalyzes specifically the phosphorylation on 2'-hydroxyl of the adenosine moiety of NAD to yield NADP. This Helicobacter pylori (strain HPAG1) protein is NAD kinase.